The following is a 353-amino-acid chain: Protein CEPU-1 (353 aa).

An N-terminal signal peptide occupies residues 1–28 (MAQAKMQHPVSWVIFAGMAALLLFQGVP). Ig-like C2-type domains follow at residues 37-124 (PKAM…PKTS), 134-216 (PKIT…VKVT), and 220-314 (PPYI…ETTT). Asparagine 42, asparagine 68, and asparagine 150 each carry an N-linked (GlcNAc...) asparagine glycan. Cysteine 55 and cysteine 113 are joined by a disulfide. Intrachain disulfides connect cysteine 155/cysteine 199 and cysteine 241/cysteine 293. Asparagine 282, asparagine 290, and asparagine 303 each carry an N-linked (GlcNAc...) asparagine glycan. Serine 330 carries the GPI-anchor amidated serine lipid modification. Positions 331 to 353 (GAWRRGSCAWLLALPLAQLARQF) are cleaved as a propeptide — removed in mature form.

This sequence belongs to the immunoglobulin superfamily. IgLON family. In terms of assembly, interacts with NEGR1. As to expression, found on the dendrites, somata and axons of developing Purkinje cells. Undetectable on other neurons like Golgi or granule cells.

The protein localises to the cell membrane. In terms of biological role, it may be a cellular address molecule specific to Purkinje cells. It may represent a receptor or a subunit of a receptor complex. The protein is Protein CEPU-1 of Gallus gallus (Chicken).